Reading from the N-terminus, the 433-residue chain is Protein translocase subunit SecY (433 aa).

A run of 10 helical transmembrane segments spans residues Ile17–Gly37, Ile71–Val91, Leu117–Val137, Gly141–Val161, Leu184–Leu204, Pro212–Phe232, Gly268–Phe288, Tyr310–Phe330, Leu366–Asn386, and Tyr388–Asp408.

Belongs to the SecY/SEC61-alpha family. As to quaternary structure, component of the Sec protein translocase complex. Heterotrimer consisting of SecY, SecE and SecG subunits. The heterotrimers can form oligomers, although 1 heterotrimer is thought to be able to translocate proteins. Interacts with the ribosome. Interacts with SecDF, and other proteins may be involved. Interacts with SecA.

The protein localises to the cell inner membrane. The central subunit of the protein translocation channel SecYEG. Consists of two halves formed by TMs 1-5 and 6-10. These two domains form a lateral gate at the front which open onto the bilayer between TMs 2 and 7, and are clamped together by SecE at the back. The channel is closed by both a pore ring composed of hydrophobic SecY resides and a short helix (helix 2A) on the extracellular side of the membrane which forms a plug. The plug probably moves laterally to allow the channel to open. The ring and the pore may move independently. The sequence is that of Protein translocase subunit SecY from Rickettsia felis (strain ATCC VR-1525 / URRWXCal2) (Rickettsia azadi).